Here is a 37-residue protein sequence, read N- to C-terminus: Somatostatin-37 (37 aa).

Residues 1 to 2 constitute a propeptide that is removed on maturation; that stretch reads AL. Cysteines 26 and 37 form a disulfide.

It belongs to the somatostatin family.

The protein resides in the secreted. Functionally, somatostatin inhibits the release of somatotropin. This is Somatostatin-37 (sst) from Petromyzon marinus (Sea lamprey).